Here is a 306-residue protein sequence, read N- to C-terminus: Mitochondrial glycine transporter (306 aa).

3 Solcar repeats span residues 25–114, 121–205, and 217–301; these read QPVI…LKQY, PTAL…TKNV, and LVPV…MMAK. Helical transmembrane passes span 31–56, 89–115, 127–152, 180–203, 221–247, and 276–294; these read FLCG…TRLQ, GMSP…KQYF, VILG…TRYE, GLTA…SQTK, VNFS…KTHM, and GSVP…AWTV.

Belongs to the mitochondrial carrier (TC 2.A.29) family. SLC25A38 subfamily.

The protein localises to the mitochondrion inner membrane. The enzyme catalyses glycine(in) = glycine(out). Mitochondrial glycine transporter that imports glycine into the mitochondrial matrix. Plays an important role in providing glycine for the first enzymatic step in heme biosynthesis, the condensation of glycine with succinyl-CoA to produce 5-aminolevulinate (ALA) in the mitochondrial matrix. Required during erythropoiesis. Its function is as follows. Plays a role as pro-apoptotic protein that induces caspase-dependent apoptosis. The polypeptide is Mitochondrial glycine transporter (Ovis aries (Sheep)).